Reading from the N-terminus, the 425-residue chain is Glutamate-1-semialdehyde 2,1-aminomutase (425 aa).

Position 265 is an N6-(pyridoxal phosphate)lysine (Lys265).

It belongs to the class-III pyridoxal-phosphate-dependent aminotransferase family. HemL subfamily. As to quaternary structure, homodimer. Requires pyridoxal 5'-phosphate as cofactor.

Its subcellular location is the cytoplasm. It carries out the reaction (S)-4-amino-5-oxopentanoate = 5-aminolevulinate. The protein operates within porphyrin-containing compound metabolism; protoporphyrin-IX biosynthesis; 5-aminolevulinate from L-glutamyl-tRNA(Glu): step 2/2. The polypeptide is Glutamate-1-semialdehyde 2,1-aminomutase (Clostridium perfringens (strain SM101 / Type A)).